The primary structure comprises 352 residues: MESGGRPSLCQFILLGTTSVVTAALYSVYRQKARVSQELKGAKKVHLGEDLKSILSEAPGKCVPYAVIEGAVRSVKETLNSQFVENCKGVIQRLTLQEHKMVWNRTTHLWNDCSKIIHQRTNTVPFDLVPHEDGVDVAVRVLKPLDSVDLGLETVYEKFHPSIQSFTDVIGHYISGERPKGIQETEEMLKVGATLTGVGELVLDNNSVRLQPPKQGMQYYLSSQDFDSLLQRQESSVRLWKVLALVFGFATCATLFFILRKQYLQRQERLRLKQMQEEFQEHEAQLLSRAKPEDRESLKSACVVCLSSFKSCVFLECGHVCSCTECYRALPEPKKCPICRQAITRVIPLYNS.

The Cytoplasmic portion of the chain corresponds to 1-8 (MESGGRPS). Residues 9–29 (LCQFILLGTTSVVTAALYSVY) traverse the membrane as a helical segment. Residues 30–238 (RQKARVSQEL…LLQRQESSVR (209 aa)) are Mitochondrial intermembrane-facing. K52 participates in a covalent cross-link: Glycyl lysine isopeptide (Lys-Gly) (interchain with G-Cter in ubiquitin). The chain crosses the membrane as a helical span at residues 239 to 259 (LWKVLALVFGFATCATLFFIL). At 260 to 352 (RKQYLQRQER…ITRVIPLYNS (93 aa)) the chain is on the cytoplasmic side. Glycyl lysine isopeptide (Lys-Gly) (interchain with G-Cter in ubiquitin) cross-links involve residues K273 and K299. The RING-type zinc-finger motif lies at 302-340 (CVVCLSSFKSCVFLECGHVCSCTECYRALPEPKKCPICR).

In terms of assembly, homooligomer. Interacts with MAP3K7/TAK1. Interacts with UBC9. Interacts with and sumoylates DNM1L. Interacts with MAVS. Interacts with TP53 (via N-terminus); the interaction leads to ubiquitination and proteasomal degradation of TP53. In terms of processing, ubiquitinated by PRKN during mitophagy, leading to its degradation and enhancement of mitophagy. Deubiquitinated by USP30. As to expression, widely expressed with highest levels in the heart, skeletal muscle, placenta, kidney and liver. Barely detectable in colon and thymus.

It localises to the mitochondrion outer membrane. The protein resides in the peroxisome. It catalyses the reaction S-ubiquitinyl-[E2 ubiquitin-conjugating enzyme]-L-cysteine + [acceptor protein]-L-lysine = [E2 ubiquitin-conjugating enzyme]-L-cysteine + N(6)-ubiquitinyl-[acceptor protein]-L-lysine.. It functions in the pathway protein modification; protein ubiquitination. The protein operates within protein modification; protein sumoylation. Its function is as follows. Exhibits weak E3 ubiquitin-protein ligase activity. E3 ubiquitin ligases accept ubiquitin from an E2 ubiquitin-conjugating enzyme in the form of a thioester and then directly transfer the ubiquitin to targeted substrates. Can ubiquitinate AKT1 preferentially at 'Lys-284' involving 'Lys-48'-linked polyubiquitination and seems to be involved in regulation of Akt signaling by targeting phosphorylated Akt to proteasomal degradation. Mediates polyubiquitination of cytoplasmic TP53 at 'Lys-24' which targets TP53 for proteasomal degradation, thus reducing TP53 levels in the cytoplasm and mitochondrion. Proposed to preferentially act as a SUMO E3 ligase at physiological concentrations. Plays a role in the control of mitochondrial morphology by promoting mitochondrial fragmentation, and influences mitochondrial localization. Likely to promote mitochondrial fission through negatively regulating the mitochondrial fusion proteins MFN1 and MFN2, acting in a pathway that is parallel to the PRKN/PINK1 regulatory pathway. May also be involved in the sumoylation of the membrane fission protein DNM1L. Inhibits cell growth. When overexpressed, activates JNK through MAP3K7/TAK1 and induces caspase-dependent apoptosis. Involved in the modulation of innate immune defense against viruses by inhibiting RIGI-dependent antiviral response. Can mediate RIGI sumoylation and disrupt its polyubiquitination. This chain is Mitochondrial ubiquitin ligase activator of NFKB 1 (MUL1), found in Homo sapiens (Human).